An 862-amino-acid chain; its full sequence is Dipeptidyl peptidase 9 (862 aa).

Catalysis depends on charge relay system residues Ser729, Asp807, and His839. Ser729 contacts Val-boroPro.

Belongs to the peptidase S9B family. DPPIV subfamily. As to quaternary structure, homodimer. Forms a ternary complex with NLRP1, composed of a DPP9 homodimer, one full-length NLRP1 protein, and one cleaved C-terminus of NLRP1 (NACHT, LRR and PYD domains-containing protein 1, C-terminus). Forms a ternary complex with CARD8, composed of a DPP9 homodimer, one full-length NLRP1 protein, and one cleaved C-terminus of CARD8 (Caspase recruitment domain-containing protein 8, C-terminus). In the ternary complex, only one subunit of the DPP9 homodimer is bound to NLRP1 or CARD8. Detected in kidney, skin, brain, thymus and liver (at protein level).

It is found in the cytoplasm. Its subcellular location is the cytosol. The enzyme catalyses Release of an N-terminal dipeptide, Xaa-Yaa-|-Zaa-, from a polypeptide, preferentially when Yaa is Pro, provided Zaa is neither Pro nor hydroxyproline.. Inhibited by the serine proteinase inhibitor 4-(2-aminoethyl)benzenesulphonyl fluoride (AEBSF), and by di-isopropylfluorophosphate. Inhibited by Val-boroPro (Talabostat, PT-100), a non-selective inhibitor, which triggers pyroptosis in monocytes and macrophages. Val-boroPro inhibits activity by binding to the active site, mimicking a substrate-bound state, thereby displacing the C-terminal fragment of NLRP1, leading to activation of the NLRP1 inflammasome. In contrast, Val-boroPro does not directly displaces CARD8: it acts by promoting degradation of the N-terminal part of CARD8, leading to indirect disruption of the ternary complex. Functionally, dipeptidyl peptidase that cleaves off N-terminal dipeptides from proteins having a Pro or Ala residue at position 2. Acts as a key inhibitor of caspase-1-dependent monocyte and macrophage pyroptosis in resting cells by preventing activation of NLRP1 and CARD8. Sequesters the cleaved C-terminal part of NLRP1 and CARD8, which respectively constitute the active part of the NLRP1 and CARD8 inflammasomes, in a ternary complex, thereby preventing their oligomerization and activation. The dipeptidyl peptidase activity is required to suppress NLRP1 and CARD8; however, neither NLRP1 nor CARD8 are bona fide substrates of DPP9, suggesting the existence of substrate(s) required for NLRP1 and CARD8 inhibition. This is Dipeptidyl peptidase 9 from Mus musculus (Mouse).